A 4493-amino-acid polypeptide reads, in one-letter code: Mucin-17 (4493 aa).

The N-terminal stretch at 1–25 is a signal peptide; sequence MPRPGTMALCLLTLVLSLLPPQAAA. Topologically, residues 26–4393 are extracellular; that stretch reads EQDLSVNRAV…QGTQKSLVYG (4368 aa). The span at 88–105 shows a compositional bias: polar residues; it reads NPEMTSIESSVTSDTPGV. Disordered stretches follow at residues 88–159, 188–223, 248–277, and 306–344; these read NPEM…SISS, LTTSTQASSSPTTPESTTIPKSTNSEGSTPLTSMPA, TISAQASSSPTTAEGPSLSNSAPSGGSTPL, and VITSTEASSSPTTAEGTSIPTSTYTEGSTPLTSTPASTM. Positions 106-146 are enriched in low complexity; that stretch reads SSTRMTPTESRTTSESTSDSTTLFPSSTEDTSSPTTPEGTD. Residues 148 to 159 are compositionally biased toward polar residues; that stretch reads PMSTPSEESISS. 57 tandem repeats follow at residues 185-245, 246-300, 301-361, 362-418, 420-477, 479-538, 539-597, 598-654, 656-715, 716-774, 775-831, 833-892, 893-951, 952-1010, 1011-1069, 1070-1121, 1122-1187, 1188-1246, 1247-1305, 1306-1364, 1365-1423, 1424-1482, 1483-1541, 1542-1600, 1601-1656, 1658-1717, 1718-1776, 1777-1835, 1836-1895, 1896-1951, 1953-2012, 2013-2071, 2072-2127, 2129-2188, 2189-2247, 2248-2306, 2307-2365, 2366-2424, 2425-2483, 2484-2540, 2542-2601, 2602-2653, 2654-2719, 2720-2770, 2772-2837, 2838-2896, 2897-2955, 2956-3014, 3015-3073, 3074-3132, 3133-3191, 3192-3247, 3249-3308, 3309-3367, 3368-3426, 3427-3485, and 3486-3544. Residues 185 to 3727 form a 59 X approximate tandem repeats region; that stretch reads STPLTTSTQA…SVVTSTPVTT (3543 aa). Over residues 188–210 the composition is skewed to low complexity; that stretch reads LTTSTQASSSPTTPESTTIPKST. Residues 211–223 show a composition bias toward polar residues; sequence NSEGSTPLTSMPA. Residues 308–323 are compositionally biased toward low complexity; it reads TSTEASSSPTTAEGTS. The segment covering 324–344 has biased composition (polar residues); the sequence is IPTSTYTEGSTPLTSTPASTM. Residues 425–441 show a composition bias toward low complexity; that stretch reads TTASEASSSPTTAEDTS. Disordered regions lie at residues 425 to 629, 644 to 868, 886 to 1104, 1116 to 1163, 1175 to 1279, and 1296 to 1338; these read TTAS…ERGT, SEAS…TPLT, STTP…TPLT, SEAS…TPLA, SEAN…GSTL, and STLL…GRTP. A compositionally biased stretch (polar residues) spans 442 to 483; the sequence is IATSTPSEGSTPLTSMPVSTTPVASSEASNLSTTPVDSKTQV. An N-linked (GlcNAc...) asparagine glycan is attached at Asn-471. The segment covering 484–497 has biased composition (low complexity); sequence TTSTEASSSPPTAE. The span at 498 to 528 shows a compositional bias: polar residues; it reads VNSMPTSTPSEGSTPLTSMSVSTMPVASSEA. 2 stretches are compositionally biased toward low complexity: residues 529–573 and 584–618; these read STLS…TPLT and SSEASTTSTTPADSNTFVTTSSEASSSSTTAEGTS. 2 stretches are compositionally biased toward polar residues: residues 619 to 629 and 644 to 660; these read MPTSTYSERGT and SEASTLSTTPVDSNTPV. Residues 661–677 show a composition bias toward low complexity; it reads TTSTEATSSSTTAEGTS. Positions 678–705 are enriched in polar residues; that stretch reads MPTSTYTEGSTPLTSMPVNTTLVASSEA. Asn-696 carries N-linked (GlcNAc...) asparagine glycosylation. Residues 706–733 are compositionally biased toward low complexity; sequence STLSTTPVDTSTPVTTSTEASSSPTTAD. Positions 737-754 are enriched in polar residues; that stretch reads MPTSTPSEGSTPLTSMPV. A compositionally biased stretch (low complexity) spans 755–776; it reads SKTLLTSSEASTLSTTPLDTST. A compositionally biased stretch (polar residues) spans 777–832; that stretch reads HITTSTEASCSPTTTEGTSMPISTPSEGSPLLTSIPVSITPVTSPEASTLSTTPVD. The segment covering 833–849 has biased composition (low complexity); it reads SNSPVTTSTEVSSSPTP. The segment covering 854–868 has biased composition (polar residues); that stretch reads SMPTSTYSEGRTPLT. A compositionally biased stretch (low complexity) spans 886 to 900; sequence STTPVDTSTPVTNST. N-linked (GlcNAc...) asparagine glycosylation occurs at Asn-898. Positions 901 to 944 are enriched in polar residues; sequence EARSSPTTSEGTSMPTSTPGEGSTPLTSMPDSTTPVVSSEARTL. Over residues 945 to 972 the composition is skewed to low complexity; sequence SATPVDTSTPVTTSTEATSSPTTAEGTS. Polar residues predominate over residues 973–1011; sequence IPTSTPSEGTTPLTSTPVSHTLVANSEASTLSTTPVDSN. Residues 1012–1021 show a composition bias toward low complexity; it reads TPLTTSTEAS. Residues 1029-1062 show a composition bias toward polar residues; it reads GTSMPTSTPSEGSTPLTRMPVSTTMVASSETSTL. Positions 1063–1090 are enriched in low complexity; that stretch reads STTPADTSTPVTTYSQASSSSTTADGTS. Polar residues-rich tracts occupy residues 1091-1104 and 1116-1132; these read MPTSTYSEGSTPLT and SEASTLSTTPVDTSIPV. The segment covering 1133-1149 has biased composition (low complexity); sequence TTSTEASSSPTTAEGTS. Composition is skewed to polar residues over residues 1175 to 1198 and 1205 to 1222; these read SEANTLSTTPVDSKTQVATSTEAS and EVTSMPTSTPGERSTPLT. Over residues 1237–1279 the composition is skewed to low complexity; it reads STLSTSPVDTSTPVTTSAETSSSPTTAEGTSLPTSTTSEGSTL. 2 stretches are compositionally biased toward polar residues: residues 1310–1320 and 1326–1338; these read VTSNEVSSSPT and SMPTSTYSEGRTP. An N-linked (GlcNAc...) asparagine glycan is attached at Asn-1345. Residues 1360–1394 show a composition bias toward polar residues; that stretch reads TPVDNSTPVTTSTEACSSPTTSEGTSMPNSNPSEG. Disordered regions lie at residues 1360–1516, 1537–1575, 1590–1930, 1947–2163, 2177–2281, 2295–2501, 2524–2630, 2647–2693, 2709–2751, 2765–2853, 2879–2925, 2942–3167, 3182–3577, 3589–3635, 3667–3701, 3785–3812, 3829–3849, 3892–3914, 3965–3988, and 4008–4129; these read TPVD…STAL, TPAVTSTPVTTYSQASSSPTTADGTSMQTSTYSEGSTPL, ANTL…PLTS, STTL…RTPL, AIST…TTPL, EVST…TTAE, TTPV…TPSE, SSEA…RSTP, ASTL…DGST, SSEA…SPTT, TPVA…TPSE, GSEA…TPLT, STLS…GSSS, TSSE…EVST, ITSTQVSSSPVTPEGTTMPIWTPSEGSTPLTTMPV, MTTASEGSSSPTTLEGTTTMPMSTTSER, PSEASTLSTPPGDTSTPLLTS, ASIASTPPLDTSTTFTPSTDTAS, VITSTELNTPSTSSSSTTTSFSTT, and STAP…TPTV. Composition is skewed to low complexity over residues 1395–1415 and 1423–1442; these read TTPLTSIPVSTTPVVSSEAST and TSTPGTTSAEATSSPTTAEG. Residues 1461–1483 show a composition bias toward polar residues; sequence PVSNTPVANSEASTLSTTPVDSN. The segment covering 1484–1499 has biased composition (low complexity); the sequence is SPVVTSTAVSSSPTPA. Over residues 1504-1516 the composition is skewed to polar residues; the sequence is IAISTPSEGSTAL. The segment covering 1537–1547 has biased composition (low complexity); that stretch reads TPAVTSTPVTT. Composition is skewed to polar residues over residues 1548 to 1575 and 1590 to 1604; these read YSQASSSPTTADGTSMQTSTYSEGSTPL and ANTLSTTPIDSKTQV. The span at 1605–1620 shows a compositional bias: low complexity; sequence TASTEASSSTTAEGSS. 2 stretches are compositionally biased toward polar residues: residues 1621–1673 and 1679–1775; these read MTIS…SSPT and SMPT…TPID. The span at 1776–1797 shows a compositional bias: low complexity; it reads TSTPVTTSTEATSSPTTAEGTS. Residues 1798 to 1836 show a composition bias toward polar residues; the sequence is IPTSTLSEGMTPLTSTPVSHTLVANSEASTLSTTPVDSN. Positions 1837–1852 are enriched in low complexity; the sequence is SPVVTSTAVSSSPTPA. The span at 1856 to 1883 shows a compositional bias: polar residues; sequence SIATSTPSEGSTALTSIPVSTTTVASSE. Over residues 1884 to 1900 the composition is skewed to low complexity; the sequence is TNTLSTTPAVTSTPVTT. Polar residues-rich tracts occupy residues 1901–1921 and 1947–1976; these read YAQVSSSPTTADGSSMPTSTP and STTLADTRTPVTTYSQASSSPTTADGTSMP. Residues 1984–2033 show a composition bias toward low complexity; sequence STPLTSMPLSTTLVVSSEASTLSTTPVDTSTPATTSTEGSSSPTTAGGTS. Composition is skewed to polar residues over residues 2034 to 2043 and 2051 to 2077; these read IQTSTPSERT and VSTTLVVSSEGNTLSTTPVDSKTQVTN. An N-linked (GlcNAc...) asparagine glycan is attached at Asn-2077. Residues 2078–2091 show a composition bias toward low complexity; it reads STEASSSATAEGSS. The span at 2092–2156 shows a compositional bias: polar residues; sequence MTISAPSEGS…EGTSMQTSTY (65 aa). Residues 2177–2196 show a composition bias toward low complexity; that stretch reads AISTLSTTPVDTSTPVTNST. N-linked (GlcNAc...) asparagine glycosylation occurs at Asn-2194. Over residues 2197–2240 the composition is skewed to polar residues; that stretch reads EARSSPTTSEGTSMPTSTPSEGSTPFTSMPVSTMPVVTSEASTL. Positions 2241–2268 are enriched in low complexity; the sequence is SATPVDTSTPVTTSTEATSSPTTAEGTS. Composition is skewed to polar residues over residues 2269–2281 and 2295–2307; these read IPTSTLSEGTTPL and EVSTLSTTPVDSN. Residues 2308-2317 show a composition bias toward low complexity; that stretch reads TPFTTSTEAS. The segment covering 2325-2358 has biased composition (polar residues); sequence GTSMPTSTSSEGNTPLTRMPVSTTMVASFETSTL. Low complexity predominate over residues 2359–2371; that stretch reads STTPADTSTPVTT. Positions 2372–2395 are enriched in polar residues; it reads YSQAGSSPTTADDTSMPTSTYSEG. Low complexity-rich tracts occupy residues 2396 to 2445 and 2462 to 2499; these read STPL…EGTS and PVSTTPVVSSEAGTLSTTPVDTSTPMTTSTEASSSPTT. Positions 2524-2547 are enriched in polar residues; sequence TTPVASPEASTLSTTPVDSNSPVV. Positions 2548–2563 are enriched in low complexity; the sequence is TSTEISSSATSAEGTS. The span at 2564–2576 shows a compositional bias: polar residues; sequence MPTSTYSEGSTPL. Residues 2586 to 2617 show a composition bias toward low complexity; that stretch reads LASSEASTLSTTPVDTSIPVTTSTETSSSPTT. The segment covering 2618 to 2628 has biased composition (polar residues); that stretch reads AKDTSMPISTP. Low complexity predominate over residues 2654-2681; the sequence is STTPVDTRTLVTTSTGTSSSPTTAEGSS. The segment covering 2682 to 2693 has biased composition (polar residues); sequence MPTSTPGERSTP. Over residues 2710–2740 the composition is skewed to low complexity; it reads STLSTTPVDTSTPVTTSAEASSSPTTAEGTS. Over residues 2741–2751 the composition is skewed to polar residues; it reads MRISTPSDGST. 2 stretches are compositionally biased toward low complexity: residues 2765–2816 and 2829–2853; these read SSEA…TSMP and TLSTTPVDTSTPVTTSTKASSSPTT. Positions 2879–2900 are enriched in polar residues; sequence TPVASSEASTLSTTPVDTSIPV. 2 stretches are compositionally biased toward low complexity: residues 2901–2917 and 2950–2976; these read TTSTEGSSSPTTAEGTS and TTPVDTRTPVTTSAEASSSPTTAEGTS. Positions 2988–3009 are enriched in polar residues; that stretch reads PLTSMSVSTMPVASSEASTLSR. Residues 3010–3031 are compositionally biased toward low complexity; sequence TPADTSTPVTTSTEASSSPTTA. Residues 3037 to 3057 show a composition bias toward polar residues; that stretch reads PISTPSEGSTPLTSIPVSTTP. Low complexity-rich tracts occupy residues 3073-3089 and 3104-3140; these read SNSPVVTSTEVSSSPTP and STPLTGVPVSTTPVTSSAISTLSTTPVDTSTPVTTST. Residues 3141 to 3166 are compositionally biased toward polar residues; sequence EAHSSPTTSEGTSMPTSTPSEGSTPL. The segment covering 3185–3211 has biased composition (low complexity); the sequence is SATPVDTSTPVTTSTEATSSTTAEGTS. The segment covering 3212–3253 has biased composition (polar residues); that stretch reads IPTSTPSEGMTPLTSVPVSNTPVASSEASILSTTPVDSNTPL. The segment covering 3254-3267 has biased composition (low complexity); sequence TTSTEASSSPPTAE. Over residues 3268–3288 the composition is skewed to polar residues; that stretch reads GTSMPTSTPSEGSTPLTSMPV. Residues 3289–3314 are compositionally biased toward low complexity; sequence STTTVASSETSTLSTTPADTSTPVTT. Residues 3329-3357 show a composition bias toward polar residues; that stretch reads SMPTSTYSEGSTPLTNMSFSTTPVVSSEA. An N-linked (GlcNAc...) asparagine glycan is attached at Asn-3344. Positions 3358-3375 are enriched in low complexity; it reads STLSTTPVDTSTPVTTST. The span at 3376–3401 shows a compositional bias: polar residues; that stretch reads EASLSPTTAEGTSIPTSSPSEGTTPL. The span at 3405–3414 shows a compositional bias: low complexity; it reads PVSTTPVVSS. Polar residues-rich tracts occupy residues 3415–3441 and 3447–3475; these read EVNTLSTTPVDSNTLVTTSTEASSSPT and SLPTSTTSEGSTPLSIMPLSTTPVASSEA. Residues 3476 to 3501 are compositionally biased toward low complexity; the sequence is STLSTTPVDTSTPVTTSSPTNSSPTT. Polar residues-rich tracts occupy residues 3502 to 3549 and 3558 to 3571; these read AEVT…TFVT and PATLQVTTMRMSTP. The segment covering 3589-3616 has biased composition (low complexity); sequence TSSEASTPSTPSVDRSTPVTTSTQSNST. 2 consecutive repeat copies span residues 3604-3662 and 3663-3727. Residues 3626–3635 show a composition bias toward polar residues; it reads PMSTPSEVST. Over residues 3667 to 3679 the composition is skewed to low complexity; that stretch reads ITSTQVSSSPVTP. Polar residues-rich tracts occupy residues 3690–3701 and 3785–3806; these read SEGSTPLTTMPV and MTTASEGSSSPTTLEGTTTMPM. Composition is skewed to low complexity over residues 3967 to 3988, 4008 to 4083, and 4090 to 4129; these read TSTELNTPSTSSSSTTTSFSTT, STAP…SSTT, and TTMTTRTKPSTRTTSFPTVTTTAVPTNTTIKSNPTSTPTV. The N-linked (GlcNAc...) asparagine glycan is linked to Asn-4116. Residues 4131 to 4170 form the EGF-like domain; the sequence is RTTTCFGDGCQNTASRCKNGGTWDGLKCQCPNLYYGELCE. 3 cysteine pairs are disulfide-bonded: Cys-4135-Cys-4147, Cys-4140-Cys-4158, and Cys-4160-Cys-4169. In terms of domain architecture, SEA spans 4184–4291; sequence ISAQMELTVT…QQIMINDICS (108 aa). N-linked (GlcNAc...) asparagine glycosylation is found at Asn-4205, Asn-4236, Asn-4267, Asn-4297, and Asn-4305. The helical transmembrane segment at 4394 to 4414 threads the bilayer; that stretch reads LVGAGVVLMLIILVALLMLVF. Topologically, residues 4415 to 4493 are cytoplasmic; sequence RSKREVKRQK…QRPQVMTTSF (79 aa).

Interacts via its C-terminus with PDZK1 and this interaction appears important for proper localization. Post-translationally, probably cleaved within the SEA domain. N-glycosylated. Contains high mannose and complex-type glycans. The forms containing the complex type glycans localize to the cell surface. Not O-glycosylated. As to expression, expressed almost exclusively in the intestine. Expression is especially high in both the duodenum and transverse colon. Expressed in mature absorptive cells of the small intestinal villi. No expression is detected in goblet cells. Highly expressed in pancreatic adenocarcinoma tissue (at protein level). Expression is not detectable in normal pancreas, in pancreatitis or in cell lines derived from other cancers.

The protein localises to the cell membrane. It is found in the secreted. Functionally, probably plays a role in maintaining homeostasis on mucosal surfaces. This Homo sapiens (Human) protein is Mucin-17 (MUC17).